A 380-amino-acid polypeptide reads, in one-letter code: Putative 12-oxophytodienoate reductase 4 (380 aa).

Residues 36 to 38 (PLT), alanine 69, and glutamine 111 contribute to the FMN site. 183–186 (HGAH) contributes to the substrate binding site. The active-site Proton donor is the tyrosine 188. FMN is bound at residue arginine 235. Arginine 276 is a substrate binding site. FMN contacts are provided by residues glycine 306 and 327 to 328 (GR).

This sequence belongs to the NADH:flavin oxidoreductase/NADH oxidase family. FMN serves as cofactor.

Putative oxophytodienoate reductase that may be involved in the biosynthesis or metabolism of oxylipin signaling molecules. The chain is Putative 12-oxophytodienoate reductase 4 (OPR4) from Oryza sativa subsp. japonica (Rice).